We begin with the raw amino-acid sequence, 488 residues long: Acetyl-coenzyme A carboxylase carboxyl transferase subunit beta, chloroplastic (488 aa).

The region spanning 221 to 488 (LWIQCDNCYA…FFPLNKNEIK (268 aa)) is the CoA carboxyltransferase N-terminal domain. Residues Cys-225, Cys-228, Cys-244, and Cys-247 each contribute to the Zn(2+) site. The C4-type zinc-finger motif lies at 225–247 (CDNCYALIYKKALKLKLNVCEQC).

The protein belongs to the AccD/PCCB family. As to quaternary structure, acetyl-CoA carboxylase is a heterohexamer composed of biotin carboxyl carrier protein, biotin carboxylase and 2 subunits each of ACCase subunit alpha and ACCase plastid-coded subunit beta (accD). Zn(2+) is required as a cofactor.

It is found in the plastid. The protein localises to the chloroplast stroma. The catalysed reaction is N(6)-carboxybiotinyl-L-lysyl-[protein] + acetyl-CoA = N(6)-biotinyl-L-lysyl-[protein] + malonyl-CoA. Its pathway is lipid metabolism; malonyl-CoA biosynthesis; malonyl-CoA from acetyl-CoA: step 1/1. Functionally, component of the acetyl coenzyme A carboxylase (ACC) complex. Biotin carboxylase (BC) catalyzes the carboxylation of biotin on its carrier protein (BCCP) and then the CO(2) group is transferred by the transcarboxylase to acetyl-CoA to form malonyl-CoA. This Aethionema grandiflorum (Persian stone-cress) protein is Acetyl-coenzyme A carboxylase carboxyl transferase subunit beta, chloroplastic.